Here is a 269-residue protein sequence, read N- to C-terminus: Formamidopyrimidine-DNA glycosylase (269 aa).

The active-site Schiff-base intermediate with DNA is Pro2. Glu3 functions as the Proton donor in the catalytic mechanism. Lys57 (proton donor; for beta-elimination activity) is an active-site residue. DNA is bound by residues His90, Arg109, and Lys150. The FPG-type zinc finger occupies 235-269; sequence RVYGRNGEPCRTCGTPIETAKHGQRSTFFCRRCQK. The Proton donor; for delta-elimination activity role is filled by Arg259.

This sequence belongs to the FPG family. Monomer. It depends on Zn(2+) as a cofactor.

It carries out the reaction Hydrolysis of DNA containing ring-opened 7-methylguanine residues, releasing 2,6-diamino-4-hydroxy-5-(N-methyl)formamidopyrimidine.. It catalyses the reaction 2'-deoxyribonucleotide-(2'-deoxyribose 5'-phosphate)-2'-deoxyribonucleotide-DNA = a 3'-end 2'-deoxyribonucleotide-(2,3-dehydro-2,3-deoxyribose 5'-phosphate)-DNA + a 5'-end 5'-phospho-2'-deoxyribonucleoside-DNA + H(+). In terms of biological role, involved in base excision repair of DNA damaged by oxidation or by mutagenic agents. Acts as a DNA glycosylase that recognizes and removes damaged bases. Has a preference for oxidized purines, such as 7,8-dihydro-8-oxoguanine (8-oxoG). Has AP (apurinic/apyrimidinic) lyase activity and introduces nicks in the DNA strand. Cleaves the DNA backbone by beta-delta elimination to generate a single-strand break at the site of the removed base with both 3'- and 5'-phosphates. The chain is Formamidopyrimidine-DNA glycosylase from Pectobacterium carotovorum subsp. carotovorum (strain PC1).